A 167-amino-acid polypeptide reads, in one-letter code: MHTPKHAIRRMSKGEMEFFEGRCQRMGEAKRTMWGTKWCGSGNEAINYTDLGYFSNLDSCCRTHDHCDSIPAGETKYGLTNEGKYTMMNCKCESAFEKCLRDVRGILEGKAAAAVRKTYFDLYGNGCFNVKCPSGARSARSEECTNGMATYTGETGYGAWAINKLNG.

3 residues coordinate Ca(2+): tryptophan 38, glycine 40, and glycine 42. Intrachain disulfides connect cysteine 39-cysteine 61, cysteine 60-cysteine 99, cysteine 67-cysteine 92, cysteine 90-cysteine 127, and cysteine 132-cysteine 144. Residue asparagine 47 is glycosylated (N-linked (GlcNAc...) asparagine). Histidine 64 is an active-site residue. Aspartate 65 contacts Ca(2+). Positions 136-140 (ARSAR) are excised as a propeptide.

Belongs to the phospholipase A2 family. Group III subfamily. Heterodimer composed of a large subunit and a small subunit; disulfide-linked. The cofactor is Ca(2+). In terms of tissue distribution, expressed by the venom gland.

The protein resides in the secreted. It carries out the reaction a 1,2-diacyl-sn-glycero-3-phosphocholine + H2O = a 1-acyl-sn-glycero-3-phosphocholine + a fatty acid + H(+). In terms of biological role, phospholipase toxin, which catalyzes the calcium-dependent hydrolysis of the 2-acyl groups in 3-sn-phosphoglycerides. Inhibits both skeletal (RYR1) and cardiac (RYR2) ryanodine receptors (calcium release channels). Probably blocks ryanodine receptors by generating a lipid product. Shows hemolytic activity, but it is not know if it is direct or indirect. In Hottentotta tamulus (Eastern Indian scorpion), this protein is Phospholipase A2.